Here is a 106-residue protein sequence, read N- to C-terminus: Urease subunit beta (106 aa).

This sequence belongs to the urease beta subunit family. Heterotrimer of UreA (gamma), UreB (beta) and UreC (alpha) subunits. Three heterotrimers associate to form the active enzyme. The apoenzyme interacts with an accessory complex composed of UreD, UreF and UreG, which is required for the assembly of the nickel containing metallocenter of UreC. The UreE protein may also play a direct role as a metallochaperone in nickel transfer to the urease apoprotein.

The protein localises to the cytoplasm. The catalysed reaction is urea + 2 H2O + H(+) = hydrogencarbonate + 2 NH4(+). It participates in nitrogen metabolism; urea degradation; CO(2) and NH(3) from urea (urease route): step 1/1. The apoenzyme can be activated in vitro in the presence of nickel ions and carbon dioxide, which promotes carboxylation of 'Lys-217' of the UreC (alpha) subunit. The polypeptide is Urease subunit beta (Klebsiella aerogenes (Enterobacter aerogenes)).